The sequence spans 273 residues: Homeobox protein Hox-C13b (273 aa).

Positions 201–260 (GRKKRVPYTKIQLKELEKEYAASKFITKDRRRRISATTSLSERQVTIWFQNRRVKEKKFV) form a DNA-binding region, homeobox.

Belongs to the Abd-B homeobox family.

It localises to the nucleus. Sequence-specific transcription factor which is part of a developmental regulatory system that provides cells with specific positional identities on the anterior-posterior axis. Plays a role in early embryonic development. The protein is Homeobox protein Hox-C13b (hoxc13b) of Danio rerio (Zebrafish).